The following is an 81-amino-acid chain: Photosystem I iron-sulfur center (81 aa).

4Fe-4S ferredoxin-type domains follow at residues 2 to 31 (SHSV…MIPW) and 39 to 68 (IASA…VRVY). The [4Fe-4S] cluster site is built by Cys11, Cys14, Cys17, Cys21, Cys48, Cys51, Cys54, and Cys58.

In terms of assembly, the eukaryotic PSI reaction center is composed of at least 11 subunits. It depends on [4Fe-4S] cluster as a cofactor.

The protein localises to the plastid. It is found in the chloroplast thylakoid membrane. It catalyses the reaction reduced [plastocyanin] + hnu + oxidized [2Fe-2S]-[ferredoxin] = oxidized [plastocyanin] + reduced [2Fe-2S]-[ferredoxin]. Apoprotein for the two 4Fe-4S centers FA and FB of photosystem I (PSI); essential for photochemical activity. FB is the terminal electron acceptor of PSI, donating electrons to ferredoxin. The C-terminus interacts with PsaA/B/D and helps assemble the protein into the PSI complex. Required for binding of PsaD and PsaE to PSI. PSI is a plastocyanin-ferredoxin oxidoreductase, converting photonic excitation into a charge separation, which transfers an electron from the donor P700 chlorophyll pair to the spectroscopically characterized acceptors A0, A1, FX, FA and FB in turn. The polypeptide is Photosystem I iron-sulfur center (Sorghum bicolor (Sorghum)).